The chain runs to 117 residues: Large ribosomal subunit protein bL20 (117 aa).

The protein belongs to the bacterial ribosomal protein bL20 family.

Binds directly to 23S ribosomal RNA and is necessary for the in vitro assembly process of the 50S ribosomal subunit. It is not involved in the protein synthesizing functions of that subunit. This Glaesserella parasuis serovar 5 (strain SH0165) (Haemophilus parasuis) protein is Large ribosomal subunit protein bL20.